A 508-amino-acid chain; its full sequence is Serine/threonine protein kinase OSK3 (508 aa).

A Protein kinase domain is found at 17–269 (YNLGRTLGIG…IREIREHQWF (253 aa)). Residues 23–31 (LGIGSFGKV) and lysine 46 contribute to the ATP site. Aspartate 140 (proton acceptor) is an active-site residue. Positions 290–330 (MIDEDTLQDVVNLGYGKDHVCESLRNRLQNEATVAYYLLLD) constitute a UBA domain. Positions 459–507 (NGRLPAVIKFEIQLYKTRDEKYLLDMQRVTGPQLLFLDFCADFLTKLRV) constitute a KA1 domain.

The protein belongs to the protein kinase superfamily. Ser/Thr protein kinase family. In terms of assembly, interacts with HDR1. As to expression, strongly expressed in immature seeds. Mostly expressed in panicles, and to a lower extent, in leaf sheaths.

It is found in the nucleus. The catalysed reaction is L-seryl-[protein] + ATP = O-phospho-L-seryl-[protein] + ADP + H(+). It carries out the reaction L-threonyl-[protein] + ATP = O-phospho-L-threonyl-[protein] + ADP + H(+). This is Serine/threonine protein kinase OSK3 from Oryza sativa subsp. indica (Rice).